A 522-amino-acid chain; its full sequence is Biotin-dependent long chain acyl-coenzyme A carboxylase beta4 subunit (522 aa).

The region spanning 11–261 (TAEKLAELRE…NCFDKPPVVN (251 aa)) is the CoA carboxyltransferase N-terminal domain. A CoA carboxyltransferase C-terminal domain is found at 270 to 503 (GHDLELDSIV…RLLLRKSMHL (234 aa)).

It belongs to the AccD/PCCB family. As to quaternary structure, the biotin-dependent long-chain acyl-CoA carboxylase (LCC) complex is composed of AccA3, which contains the biotin carboxylase (BC) and biotin carboxyl carrier protein (BCCP) domains, and AccD4, which contains the carboxyl transferase (CT) domain. The complex also contains the beta5 subunit AccD5 and the epsilon subunit AccE5. The four subunits are essential for activity, but AccD5, together with AccE5, probably plays a structural role rather than a catalytic one.

In terms of biological role, component of a biotin-dependent acyl-CoA carboxylase complex. This subunit transfers the CO2 from carboxybiotin to the CoA ester substrate. When associated with the alpha3 subunit AccA3, the beta5 subunit AccD5 and the epsilon subunit AccE5, forms the LCC complex, which is involved in the carboxylation of long chain acyl-CoA. The LCC complex can use C16-C24 substrates, the highest specific activity is obtained with carboxy-C20-CoA. Has low activity with acetyl-CoA and propionyl-CoA. The sequence is that of Biotin-dependent long chain acyl-coenzyme A carboxylase beta4 subunit from Mycobacterium tuberculosis (strain ATCC 25618 / H37Rv).